A 239-amino-acid polypeptide reads, in one-letter code: MISNNLEICSIDIGVHWYWNFLGLKIHGQVLLVSWVAIIILLLLAILGTFNMQKEPRGFQNFLEYVFEFLQDISKNQIEEKYYKSWVPFISTLFLFIFVSNWLGALVPWKLIKIPEGELAAPTNDINTTVALAMLTSVSYFYAGLSKKGLRYFLKYISPTPILLPINILEDFTKPLSLSFRLFGNIVADELVVAVFNLLFPLFLPLPVMVLGLFASSIQALIFATLSASYIGESLADHH.

5 helical membrane passes run 30-50 (VLLVSWVAIIILLLLAILGTF), 87-107 (VPFISTLFLFIFVSNWLGALV), 126-146 (INTTVALAMLTSVSYFYAGLS), 191-211 (LVVAVFNLLFPLFLPLPVMVL), and 212-232 (GLFASSIQALIFATLSASYIG).

Belongs to the ATPase A chain family. As to quaternary structure, F-type ATPases have 2 components, CF(1) - the catalytic core - and CF(0) - the membrane proton channel. CF(1) has five subunits: alpha(3), beta(3), gamma(1), delta(1), epsilon(1). CF(0) has four main subunits: a, b, b' and c.

It localises to the plastid. The protein localises to the chloroplast thylakoid membrane. In terms of biological role, key component of the proton channel; it plays a direct role in the translocation of protons across the membrane. In Cyanidium caldarium (Red alga), this protein is ATP synthase subunit a, chloroplastic.